The primary structure comprises 645 residues: Aspartate--tRNA ligase, mitochondrial (645 aa).

The transit peptide at 1 to 47 directs the protein to the mitochondrion; that stretch reads MYFPSWLSQLYRGLSRPIRRTTQPIWGSLYRSLLQSSQRRIPEFSSF. Threonine 219 carries the phosphothreonine modification. Serine 242 is subject to Phosphoserine. An aspartate region spans residues 244 to 247; the sequence is QQFK. Arginine 266 contacts L-aspartate. An ATP-binding site is contributed by 266 to 268; the sequence is RDE. At lysine 382 the chain carries N6-acetyllysine. An ATP-binding site is contributed by glutamate 535. L-aspartate is bound at residue arginine 542. 584 to 587 lines the ATP pocket; that stretch reads GLDR.

This sequence belongs to the class-II aminoacyl-tRNA synthetase family. Type 1 subfamily. In terms of assembly, homodimer.

The protein resides in the mitochondrion matrix. It is found in the mitochondrion membrane. It catalyses the reaction tRNA(Asp) + L-aspartate + ATP = L-aspartyl-tRNA(Asp) + AMP + diphosphate. Functionally, catalyzes the attachment of aspartate to tRNA(Asp) in a two-step reaction: aspartate is first activated by ATP to form Asp-AMP and then transferred to the acceptor end of tRNA(Asp). This is Aspartate--tRNA ligase, mitochondrial (DARS2) from Homo sapiens (Human).